We begin with the raw amino-acid sequence, 332 residues long: GTP 3',8-cyclase (332 aa).

One can recognise a Radical SAM core domain in the interval 9–220; that stretch reads GYNRRVDYLR…TQVRERIAER (212 aa). R18 serves as a coordination point for GTP. The [4Fe-4S] cluster site is built by C25 and C29. Y31 is a binding site for S-adenosyl-L-methionine. C32 lines the [4Fe-4S] cluster pocket. Residue R67 coordinates GTP. G71 contributes to the S-adenosyl-L-methionine binding site. T98 serves as a coordination point for GTP. S122 contributes to the S-adenosyl-L-methionine binding site. K159 is a GTP binding site. Position 193 (M193) interacts with S-adenosyl-L-methionine. Residues C258 and C261 each coordinate [4Fe-4S] cluster. 263-265 lines the GTP pocket; that stretch reads RVR. Residue C275 coordinates [4Fe-4S] cluster.

Belongs to the radical SAM superfamily. MoaA family. In terms of assembly, monomer and homodimer. [4Fe-4S] cluster is required as a cofactor.

The catalysed reaction is GTP + AH2 + S-adenosyl-L-methionine = (8S)-3',8-cyclo-7,8-dihydroguanosine 5'-triphosphate + 5'-deoxyadenosine + L-methionine + A + H(+). The protein operates within cofactor biosynthesis; molybdopterin biosynthesis. Its function is as follows. Catalyzes the cyclization of GTP to (8S)-3',8-cyclo-7,8-dihydroguanosine 5'-triphosphate. The polypeptide is GTP 3',8-cyclase (Pseudomonas fluorescens (strain Pf0-1)).